The primary structure comprises 267 residues: Cysteine protease avirulence protein AvrPphB (267 aa).

Residue glycine 63 is the site of N-myristoyl glycine; by host attachment. Residues cysteine 98, histidine 212, and aspartate 227 contribute to the active site.

This sequence belongs to the peptidase C58 family. In infected plant cells, the 28 kDa product interacts with PBS1. Autocleaved. This function is essential for myristoylation in infected plant cell and for eliciting the plant hypersensitive response. Post-translationally, myristoylation of 28 kDa product in infected plant cells; it mediates the localization to membranes.

It localises to the secreted. Its subcellular location is the host membrane. Cysteine protease avirulence protein, which is essential during infection of plant cells from cultivar-specific of beans and Arabidopsis thaliana. The autocleavage of the protein is required for virulence function. May act by affecting the plant defense system. In plants lacking R3 or RPS5 resistance genes, it probably impairs the plant defense system and leads to the bacteria multiplication. In contrast, in plants containing the R3 or RPS5 protein, it is unable to induce disease symptoms, explaining its avirulence name. The 7 kDa product is required for the type-III translocation from Pseudomonas strains to the plant, but are partially dispensable for effector recognition following in planta expression. In infected plants, it acts by cleaving the PBS1 protein, which leads to resistance or disease, depending on the presence or absence of RPS5, respectively. Targets the Arabidopsis kinases PBS1, BIK1, PBL1, PBL2, PBL3, PBL5, PBL7, PBL9 and PBL11 for cleavage in vitro. Can block recognition of AvrB avirulence factor by plant cells by cleaving Arabidopsis RIPK kinase and suppressing Arabidopsis RPM1 activation. Cannot block AvrRpm1-induced activation of RPM1. This Pseudomonas savastanoi pv. phaseolicola (Pseudomonas syringae pv. phaseolicola) protein is Cysteine protease avirulence protein AvrPphB (avrPph3).